A 132-amino-acid chain; its full sequence is Small ribosomal subunit protein uS8 (132 aa).

Belongs to the universal ribosomal protein uS8 family. In terms of assembly, part of the 30S ribosomal subunit. Contacts proteins S5 and S12.

Its function is as follows. One of the primary rRNA binding proteins, it binds directly to 16S rRNA central domain where it helps coordinate assembly of the platform of the 30S subunit. The chain is Small ribosomal subunit protein uS8 from Clostridium botulinum (strain ATCC 19397 / Type A).